Reading from the N-terminus, the 360-residue chain is Putative F-box protein At5g55150 (360 aa).

Residues 6–54 (SSWSEFLPELLNTVFHNLNDARDILNCATVCSSWKDSSSAVYYSRTFSP) form the F-box domain.

The polypeptide is Putative F-box protein At5g55150 (Arabidopsis thaliana (Mouse-ear cress)).